The sequence spans 1091 residues: ATP-dependent helicase/deoxyribonuclease subunit B (1091 aa).

The protein belongs to the helicase family. AddB/RexB type 2 subfamily. Heterodimer of AddA and RexB. Mg(2+) serves as cofactor.

The heterodimer acts as both an ATP-dependent DNA helicase and an ATP-dependent, dual-direction single-stranded exonuclease. Recognizes the chi site generating a DNA molecule suitable for the initiation of homologous recombination. This subunit has 5' -&gt; 3' nuclease activity but not helicase activity. In Streptococcus pneumoniae (strain Hungary19A-6), this protein is ATP-dependent helicase/deoxyribonuclease subunit B.